The primary structure comprises 131 residues: Histone H2B.2 (131 aa).

Over residues 1-20 the composition is skewed to basic and acidic residues; that stretch reads MAPPKAEKKPASKAPAEKKP. A disordered region spans residues 1–39; the sequence is MAPPKAEKKPASKAPAEKKPAAKKTASSTDAKKRTKTRK. N6-acetyllysine; alternate is present on residues Lys8 and Lys9. Glycyl lysine isopeptide (Lys-Gly) (interchain with G-Cter in SUMO); alternate cross-links involve residues Lys8 and Lys9. Position 12 is a phosphoserine (Ser12). Residue Lys13 is modified to N6-acetyllysine. The residue at position 18 (Lys18) is an N6-acetyllysine; alternate. Lys18 participates in a covalent cross-link: Glycyl lysine isopeptide (Lys-Gly) (interchain with G-Cter in SUMO); alternate. Lys19 participates in a covalent cross-link: Glycyl lysine isopeptide (Lys-Gly) (interchain with G-Cter in SUMO). Residue Lys125 forms a Glycyl lysine isopeptide (Lys-Gly) (interchain with G-Cter in ubiquitin) linkage.

It belongs to the histone H2B family. In terms of assembly, the nucleosome is a histone octamer containing two molecules each of H2A, H2B, H3 and H4 assembled in one H3-H4 heterotetramer and two H2A-H2B heterodimers. The octamer wraps approximately 147 bp of DNA. Monoubiquitinated to form H2BK123ub1. H2BK123ub1 gives a specific tag for epigenetic transcriptional activation and is also prerequisite for H3K4me and H3K79me formation. H2BK123ub1 also modulates the formation of double-strand breaks during meiosis and is a prerequisite for DNA-damage checkpoint activation. In terms of processing, phosphorylated by STE20 to form H2BS10ph during progression through meiotic prophase. May be correlated with chromosome condensation. Post-translationally, acetylated by GCN5 to form H2BK11ac and H2BK16ac. H2BK16ac can also be formed by ESA1. Acetylation of N-terminal lysines and particularly formation of H2BK11acK16ac has a positive effect on transcription. Sumoylation to form H2BK6su or H2BK7su, and probably also H2BK16su or H2BK17su, occurs preferentially near the telomeres and represses gene transcription.

The protein localises to the nucleus. It localises to the chromosome. In terms of biological role, core component of nucleosome. Nucleosomes wrap and compact DNA into chromatin, limiting DNA accessibility to the cellular machineries which require DNA as a template. Histones thereby play a central role in transcription regulation, DNA repair, DNA replication and chromosomal stability. DNA accessibility is regulated via a complex set of post-translational modifications of histones, also called histone code, and nucleosome remodeling. This chain is Histone H2B.2 (HTB2), found in Scheffersomyces stipitis (strain ATCC 58785 / CBS 6054 / NBRC 10063 / NRRL Y-11545) (Yeast).